We begin with the raw amino-acid sequence, 661 residues long: 7-beta-hydroxy-3-oxochol-24-oyl-CoA 4-desaturase (661 aa).

Position 104 (Gln-104) interacts with FMN. 168–171 provides a ligand contact to substrate; sequence HCAH. Tyr-173 acts as the Proton donor in catalysis. FMN contacts are provided by residues Arg-222, Lys-298, and 320–321; that span reads GR. [4Fe-4S] cluster is bound by residues Cys-344, Cys-347, Cys-351, and Cys-363. Residues Gly-394, Glu-413, Gln-421, Lys-431, and Ala-458 each contribute to the FAD site.

The protein in the N-terminal section; belongs to the NADH:flavin oxidoreductase/NADH oxidase family. Homotrimer. The cofactor is FMN. FAD is required as a cofactor. It depends on [4Fe-4S] cluster as a cofactor.

It carries out the reaction 7beta-hydroxy-3-oxochol-24-oyl-CoA + NAD(+) = 7beta-hydroxy-3-oxochol-4-en-24-oyl-CoA + NADH + H(+). The protein operates within lipid metabolism; bile acid degradation. Its activity is regulated as follows. Activity is inhibited by sulfhydryl-reactive compounds, acriflavine, o-phenanthroline and EDTA. Its function is as follows. NADH-dependent flavin oxidoreductase. Stereo-specific NAD(H)-dependent 3-oxo-delta4-cholenoic acid oxidoreductase involved in bile acid 7beta-dehydroxylation. The chain is 7-beta-hydroxy-3-oxochol-24-oyl-CoA 4-desaturase from Clostridium scindens (strain JCM 10418 / VPI 12708).